Here is a 112-residue protein sequence, read N- to C-terminus: cAMP-regulated phosphoprotein 19 (112 aa).

Residues M1 to A11 are compositionally biased toward low complexity. A disordered region spans residues M1–F48. The residue at position 2 (S2) is an N-acetylserine. A compositionally biased stretch (basic and acidic residues) spans E12–L32. Phosphoserine; by GWL occurs at positions 62 and 104. Residues K73–G112 form a disordered region. A Phosphoserine; by PKA modification is found at S104.

The protein belongs to the endosulfine family. As to quaternary structure, interacts (when phosphorylated at Ser-62) with PPP2R2D. In terms of processing, phosphorylation at Ser-62 by MASTL/GWL during mitosis is essential for interaction with PPP2R2D (PR55-delta) and subsequent inactivation of PP2A.

The protein resides in the cytoplasm. Functionally, protein phosphatase inhibitor that specifically inhibits protein phosphatase 2A (PP2A) during mitosis. Inhibition of PP2A is enhanced when ARPP19 is phosphorylated. When phosphorylated at Ser-62 during mitosis, specifically interacts with PPP2R2D (PR55-delta) and inhibits its activity, leading to inactivation of PP2A, an essential condition to keep cyclin-B1-CDK1 activity high during M phase. This is cAMP-regulated phosphoprotein 19 (ARPP19) from Gallus gallus (Chicken).